The sequence spans 867 residues: Inactive tyrosine-protein kinase kin-32 (867 aa).

The region spanning 3–327 (GLARVFLIGG…GYQMLYNQRD (325 aa)) is the FERM domain. Positions 367–631 (ITLKELIGGG…IIEDVRQQII (265 aa)) constitute a Protein kinase domain. Residues 373 to 381 (IGGGQFGNV) and Lys400 contribute to the ATP site. A coiled-coil region spans residues 662 to 691 (TLYRTMEDQKRQAEEDAKWLEQEDDEDEDD). The tract at residues 674-729 (AEEDAKWLEQEDDEDEDDQDIDQIPSTSHSSVENIRTSNGYLHHTPTSTRSLRFED) is disordered. Residues 683–694 (QEDDEDEDDQDI) show a composition bias toward acidic residues. The span at 698 to 724 (PSTSHSSVENIRTSNGYLHHTPTSTRS) shows a compositional bias: polar residues.

Belongs to the protein kinase superfamily. Tyr protein kinase family. FAK subfamily. In terms of tissue distribution, expressed in body wall muscles and some neurons in the head.

Its function is as follows. Has apparently no tyrosine kinase activity in vitro when expressed in mammalian cells. This Caenorhabditis elegans protein is Inactive tyrosine-protein kinase kin-32.